We begin with the raw amino-acid sequence, 2120 residues long: Separin (2120 aa).

A Phosphoserine modification is found at serine 1126. The segment at 1299 to 1355 (IKSVPGSEPSKTQGQKRSGRGRQKLASAPLRLNNTSQKGLEGRGLPCTPKPPDRIRQ) is disordered. A phosphoserine mark is found at serine 1396 and serine 1399. Disordered regions lie at residues 1412 to 1485 (AEEP…PEIM) and 1507 to 1561 (GSDG…PRLR). Composition is skewed to basic residues over residues 1418–1432 (RGTA…RKGL) and 1454–1463 (RSRRAKKVAS). The segment covering 1464–1473 (RHCEERRPQR) has biased composition (basic and acidic residues). The residue at position 1508 (serine 1508) is a Phosphoserine. The segment covering 1548-1558 (PDKESDKDLGP) has biased composition (basic and acidic residues). Residues 1945-2040 (PRSTFYVLNP…SAALAVRGNL (96 aa)) form the Peptidase C50 domain. The active site involves cysteine 2029.

In terms of assembly, interacts with PTTG1. Interacts with RAD21. Autocleaves. This function, which is not essential for its protease activity, is unknown. Post-translationally, phosphorylated by CDK1. There are 8 Ser/Thr phosphorylation sites. Among them, Ser-1126 phosphorylation is the major site, which conducts to the enzyme inactivation.

The protein resides in the cytoplasm. Its subcellular location is the nucleus. It catalyses the reaction All bonds known to be hydrolyzed by this endopeptidase have arginine in P1 and an acidic residue in P4. P6 is often occupied by an acidic residue or by a hydroxy-amino-acid residue, the phosphorylation of which enhances cleavage.. With respect to regulation, regulated by at least two independent mechanisms. First, it is inactivated via its interaction with securin/PTTG1, which probably covers its active site. The association with PTTG1 is not only inhibitory, since PTTG1 is also required for activating it, the enzyme being inactive in cells in which PTTG1 is absent. PTTG1 degradation at anaphase, liberates it and triggers RAD21 cleavage. Second, phosphorylation at Ser-1126 inactivates it. The complete phosphorylation during mitosis, is removed when cells undergo anaphase. Activation of the enzyme at the metaphase-anaphase transition probably requires the removal of both securin and inhibitory phosphate. Caspase-like protease, which plays a central role in the chromosome segregation by cleaving the SCC1/RAD21 subunit of the cohesin complex at the onset of anaphase. During most of the cell cycle, it is inactivated by different mechanisms. The sequence is that of Separin (ESPL1) from Homo sapiens (Human).